The chain runs to 349 residues: Phosphoribosylformylglycinamidine cyclo-ligase (349 aa).

The protein belongs to the AIR synthase family.

The protein resides in the cytoplasm. It catalyses the reaction 2-formamido-N(1)-(5-O-phospho-beta-D-ribosyl)acetamidine + ATP = 5-amino-1-(5-phospho-beta-D-ribosyl)imidazole + ADP + phosphate + H(+). It functions in the pathway purine metabolism; IMP biosynthesis via de novo pathway; 5-amino-1-(5-phospho-D-ribosyl)imidazole from N(2)-formyl-N(1)-(5-phospho-D-ribosyl)glycinamide: step 2/2. This is Phosphoribosylformylglycinamidine cyclo-ligase from Methanococcus maripaludis (strain C5 / ATCC BAA-1333).